We begin with the raw amino-acid sequence, 198 residues long: uncharacterized protein (198 aa).

To A.aeolicus aq_1211 and aq_1583.

This is an uncharacterized protein from Aquifex aeolicus (strain VF5).